Reading from the N-terminus, the 606-residue chain is NADH-ubiquinone oxidoreductase chain 5 (606 aa).

A run of 16 helical transmembrane segments spans residues 4–24 (FPSL…TTTI), 38–58 (NIIS…IHSG), 87–107 (MIFV…SMWY), 114–134 (ITQF…LVTA), 140–160 (LFIG…WWYG), 171–191 (AILY…WFLF), 213–233 (LMGL…HPWL), 241–261 (TPVS…FLLI), 273–293 (VQTF…ICAL), 301–320 (IIAF…IGIN), 325–347 (AFLH…GSII), 366–386 (MPFT…MPFL), 409–429 (LLIT…MIFF), 457–477 (LLIG…PTTI), 488–508 (LTAL…SLAT), and 583–603 (LIKL…LLLM).

It belongs to the complex I subunit 5 family. As to quaternary structure, core subunit of respiratory chain NADH dehydrogenase (Complex I) which is composed of 45 different subunits.

It is found in the mitochondrion inner membrane. The enzyme catalyses a ubiquinone + NADH + 5 H(+)(in) = a ubiquinol + NAD(+) + 4 H(+)(out). In terms of biological role, core subunit of the mitochondrial membrane respiratory chain NADH dehydrogenase (Complex I) which catalyzes electron transfer from NADH through the respiratory chain, using ubiquinone as an electron acceptor. Essential for the catalytic activity and assembly of complex I. The sequence is that of NADH-ubiquinone oxidoreductase chain 5 (MT-ND5) from Ceratotherium simum (White rhinoceros).